The primary structure comprises 139 residues: Class I hydrophobin 1 (139 aa).

Positions Met1–Pro21 are cleaved as a signal peptide. 4 cysteine pairs are disulfide-bonded: Cys57–Cys118, Cys64–Cys112, Cys65–Cys98, and Cys119–Cys132.

It belongs to the fungal hydrophobin family. Self-assembles to form functional amyloid fibrils called rodlets. Self-assembly into fibrillar rodlets occurs spontaneously at hydrophobic:hydrophilic interfaces and the rodlets further associate laterally to form amphipathic monolayers.

The protein resides in the secreted. Its subcellular location is the cell wall. In terms of biological role, aerial growth, conidiation, and dispersal of filamentous fungi in the environment rely upon a capability of their secreting small amphipathic proteins called hydrophobins (HPBs) with low sequence identity. Class I can self-assemble into an outermost layer of rodlet bundles on aerial cell surfaces, conferring cellular hydrophobicity that supports fungal growth, development and dispersal; whereas Class II form highly ordered films at water-air interfaces through intermolecular interactions but contribute nothing to the rodlet structure. Hah1 is a class I hydrophobin that is involved in aerial growth of mycelia, but does not play a role in pathogenesis. This is Class I hydrophobin 1 from Heterobasidion annosum (Root rot fungus).